The primary structure comprises 206 residues: Recombination protein RecR (206 aa).

Residues 60–75 (CARCNTFCEGGLCDIC) form a C4-type zinc finger. Residues 83–178 (RRLMVVHMPA…KVSRLSQGIP (96 aa)) form the Toprim domain.

It belongs to the RecR family.

Its function is as follows. May play a role in DNA repair. It seems to be involved in an RecBC-independent recombinational process of DNA repair. It may act with RecF and RecO. The polypeptide is Recombination protein RecR (Neisseria gonorrhoeae (strain NCCP11945)).